The sequence spans 104 residues: Small ribosomal subunit protein uS10 (104 aa).

Belongs to the universal ribosomal protein uS10 family. As to quaternary structure, part of the 30S ribosomal subunit.

Involved in the binding of tRNA to the ribosomes. This Helicobacter pylori (strain P12) protein is Small ribosomal subunit protein uS10.